The following is a 245-amino-acid chain: MSQSGSVLRRNGFTFKQFFVAHDRCAMKVGTDGILLGAWAPVADVKRILDIGTGSGLLALMLAQRTDDSVPVDAVELDAGAAMQAQENVAHSPWPHRITVHTDDIQRWAPRQTVRFDLIISNPPYYEPGVECSTPQREQARYTATLDHQTLLAIAADCITEDGFFCVVLPEQIGNAFTQQALNMGWHLRLRTDVAENEARLPHRVLLAFSPQAGECFSDRLVIRGSDQNYSESYTALTQAFYLFM.

Belongs to the methyltransferase superfamily. tRNA (adenine-N(6)-)-methyltransferase family.

Its subcellular location is the cytoplasm. It carries out the reaction adenosine(37) in tRNA1(Val) + S-adenosyl-L-methionine = N(6)-methyladenosine(37) in tRNA1(Val) + S-adenosyl-L-homocysteine + H(+). Its function is as follows. Specifically methylates the adenine in position 37 of tRNA(1)(Val) (anticodon cmo5UAC). This is tRNA1(Val) (adenine(37)-N6)-methyltransferase from Salmonella typhi.